A 134-amino-acid polypeptide reads, in one-letter code: MKKFINRLLLMLMSVVVGRIAGANELEMRYQAGIEVKRDVQVKRVERKISYRAPRIEDAIALNIYVEDKISGIKPYIPGLTGLVRKAIKIAYRDGVDSAMNIFKSYDTAIQNEIRKIIEEGLKMYEKIRSEGRP.

This is an uncharacterized protein from Thermoproteus tenax virus 1 (strain KRA1) (TTV1).